The following is a 349-amino-acid chain: GTP 3',8-cyclase (349 aa).

In terms of domain architecture, Radical SAM core spans 24-250 (PFGRAVTYLR…DIPYRTGGPA (227 aa)). Position 33 (Arg-33) interacts with GTP. [4Fe-4S] cluster-binding residues include Cys-40 and Cys-44. S-adenosyl-L-methionine is bound at residue Tyr-46. Cys-47 contacts [4Fe-4S] cluster. A GTP-binding site is contributed by Arg-82. Gly-86 contributes to the S-adenosyl-L-methionine binding site. Residue Thr-116 coordinates GTP. Ser-140 provides a ligand contact to S-adenosyl-L-methionine. Lys-176 is a GTP binding site. Met-210 is a binding site for S-adenosyl-L-methionine. [4Fe-4S] cluster contacts are provided by Cys-273 and Cys-276. 278 to 280 (RVR) is a binding site for GTP. Cys-290 lines the [4Fe-4S] cluster pocket.

It belongs to the radical SAM superfamily. MoaA family. As to quaternary structure, monomer and homodimer. [4Fe-4S] cluster is required as a cofactor.

The enzyme catalyses GTP + AH2 + S-adenosyl-L-methionine = (8S)-3',8-cyclo-7,8-dihydroguanosine 5'-triphosphate + 5'-deoxyadenosine + L-methionine + A + H(+). The protein operates within cofactor biosynthesis; molybdopterin biosynthesis. In terms of biological role, catalyzes the cyclization of GTP to (8S)-3',8-cyclo-7,8-dihydroguanosine 5'-triphosphate. The protein is GTP 3',8-cyclase of Rhizobium meliloti (strain 1021) (Ensifer meliloti).